We begin with the raw amino-acid sequence, 305 residues long: Superkiller complex protein 8 (305 aa).

At Met-1 the chain carries N-acetylmethionine. Residue Thr-2 is modified to N-acetylthreonine; in WD repeat-containing protein 61, N-terminally processed. 7 WD repeats span residues 14–57, 62–101, 104–143, 146–187, 188–227, 230–269, and 272–305; these read AHDD…LDLQ, GHQL…QIKS, AGPV…KEYS, TRGK…HTLE, GHAM…LAGT, GHAS…CVHT, and DHQD…DCPI.

The protein belongs to the SKI8 family. As to quaternary structure, component of the PAF1 complex, which consists of CDC73, PAF1, LEO1, CTR9, RTF1 and SKIC8. The PAF1 complex interacts with PHF5A. Within the PAF1 complex interacts directly with PHF5A. Component of the SKI complex which consists of SKIC2, SKIC3 and SKIC8.

It localises to the nucleus. The protein localises to the cytoplasm. Functionally, component of the PAF1 complex (PAF1C) which has multiple functions during transcription by RNA polymerase II and is implicated in regulation of development and maintenance of embryonic stem cell pluripotency. PAF1C associates with RNA polymerase II through interaction with POLR2A CTD non-phosphorylated and 'Ser-2'- and 'Ser-5'-phosphorylated forms and is involved in transcriptional elongation, acting both independently and synergistically with TCEA1 and in cooperation with the DSIF complex and HTATSF1. PAF1C is required for transcription of Hox and Wnt target genes. PAF1C is involved in hematopoiesis and stimulates transcriptional activity of KMT2A/MLL1; it promotes leukemogenesis through association with KMT2A/MLL1-rearranged oncoproteins, such as KMT2A/MLL1-MLLT3/AF9 and KMT2A/MLL1-MLLT1/ENL. PAF1C is involved in histone modifications such as ubiquitination of histone H2B and methylation on histone H3 'Lys-4' (H3K4me3). PAF1C recruits the RNF20/40 E3 ubiquitin-protein ligase complex and the E2 enzyme UBE2A or UBE2B to chromatin which mediate monoubiquitination of 'Lys-120' of histone H2B (H2BK120ub1); UB2A/B-mediated H2B ubiquitination is proposed to be coupled to transcription. PAF1C is involved in mRNA 3' end formation probably through association with cleavage and poly(A) factors. In case of infection by influenza A strain H3N2, PAF1C associates with viral NS1 protein, thereby regulating gene transcription. Required for mono- and trimethylation on histone H3 'Lys-4' (H3K4me3), dimethylation on histone H3 'Lys-79' (H3K4me3). Required for Hox gene transcription. Also acts as a component of the SKI complex, a multiprotein complex that assists the RNA-degrading exosome during the mRNA decay and quality-control pathways. The SKI complex catalyzes mRNA extraction from 80S ribosomal complexes in the 3'-5' direction and channels mRNA to the cytosolic exosome for degradation. SKI-mediated extraction of mRNA from stalled ribosomes allow binding of the Pelota-HBS1L complex and subsequent ribosome disassembly by ABCE1 for ribosome recycling. The polypeptide is Superkiller complex protein 8 (Homo sapiens (Human)).